Reading from the N-terminus, the 216-residue chain is Ribose-5-phosphate isomerase A (216 aa).

Substrate is bound by residues 26 to 29 (TGST), 79 to 82 (DGAD), and 92 to 95 (KGGG). E101 (proton acceptor) is an active-site residue. Position 119 (K119) interacts with substrate.

The protein belongs to the ribose 5-phosphate isomerase family. In terms of assembly, homodimer.

It carries out the reaction aldehydo-D-ribose 5-phosphate = D-ribulose 5-phosphate. Its pathway is carbohydrate degradation; pentose phosphate pathway; D-ribose 5-phosphate from D-ribulose 5-phosphate (non-oxidative stage): step 1/1. Catalyzes the reversible conversion of ribose-5-phosphate to ribulose 5-phosphate. The sequence is that of Ribose-5-phosphate isomerase A from Legionella pneumophila subsp. pneumophila (strain Philadelphia 1 / ATCC 33152 / DSM 7513).